The primary structure comprises 385 residues: NifS/IcsS protein homolog (385 aa).

Pyridoxal 5'-phosphate is bound by residues 69–70 (GT), Asn-149, Gln-178, and 199–201 (SSH). Lys-202 is subject to N6-(pyridoxal phosphate)lysine. Thr-237 contacts pyridoxal 5'-phosphate. Cys-325 acts as the Cysteine persulfide intermediate in catalysis. Cys-325 provides a ligand contact to [2Fe-2S] cluster.

Belongs to the class-V pyridoxal-phosphate-dependent aminotransferase family. NifS/IscS subfamily. Requires pyridoxal 5'-phosphate as cofactor.

The polypeptide is NifS/IcsS protein homolog (Lactobacillus delbrueckii subsp. bulgaricus (strain ATCC 11842 / DSM 20081 / BCRC 10696 / JCM 1002 / NBRC 13953 / NCIMB 11778 / NCTC 12712 / WDCM 00102 / Lb 14)).